The sequence spans 65 residues: Sarcoplasmic/endoplasmic reticulum calcium ATPase regulator ARLN (65 aa).

The residue at position 1 (Met-1) is an N-acetylmethionine. Positions 1-36 (MEVSQAASGTDGVRERRGSFEAGRRNQDEAPQSGMN) are disordered. The segment covering 12-28 (GVRERRGSFEAGRRNQD) has biased composition (basic and acidic residues). The residue at position 19 (Ser-19) is a Phosphoserine. Residues 44–64 (WLDLWLFILFDLALFVFVYLL) form a helical membrane-spanning segment.

In terms of assembly, homooligomer. Can also form heterooligomers with other sarcoplasmic/endoplasmic reticulum calcium ATPase (SERCA) regulators ERLN, PLN, SLN and STRIT1/DWORF. Monomer. Interacts as a monomer with ATP2A2/SERCA2; the interaction results in inhibition of ATP2A2 Ca(2+) affinity. In the embryo, expressed in heart, epidermal epithelium, salivary gland, brown fat, intestinal epithelium and bladder urothelium.

Its subcellular location is the endoplasmic reticulum membrane. Its function is as follows. Inhibits the activity of the calcium ATPases ATP2A2/SERCA2 and ATP2A3/SERCA3 by decreasing their apparent affinity for Ca(2+). This is Sarcoplasmic/endoplasmic reticulum calcium ATPase regulator ARLN (Arln) from Mus musculus (Mouse).